Reading from the N-terminus, the 309-residue chain is Protein FdhE homolog (309 aa).

Belongs to the FdhE family.

It is found in the cytoplasm. Functionally, necessary for formate dehydrogenase activity. The protein is Protein FdhE homolog of Serratia proteamaculans (strain 568).